The sequence spans 326 residues: MGVSAEPRSLSVAGAGLASPVIEKARSALLQSQDVEDTVETLMLHPVIKAFLCGSISGTCSTLLFQPLDLLKTRLQALQPSDLGPRRVGMLAVFLKVVRTESLLGLWKGMSPSIVRCVPGVGIYFGTLYSSKQYFLRGHPPTALESVILGMGSRSVAGVCMSPITVIKTRYESGTYSYESIYAALRSIYCSEGHRGLFRGLTATLLRDAPFSGLYLMFYSQTRTAVLHGTAQLDAALIPLINFSCGIFAGVLASLVTQPADVIKTHMQLSPVKFQWIGQAATLIFKNHGLRGFFHGSVPRALRRTLMAAMAWTVYEEMMARMGLKS.

3 Solcar repeats span residues 45 to 134 (HPVI…SKQY), 141 to 225 (PTAL…TRTA), and 237 to 321 (LIPL…MMAR). 6 consecutive transmembrane segments (helical) span residues 51–76 (FLCG…TRLQ), 109–135 (GMSP…KQYF), 147–172 (VILG…TRYE), 200–223 (GLTA…SQTR), 241–267 (INFS…KTHM), and 296–314 (GSVP…AWTV).

This sequence belongs to the mitochondrial carrier (TC 2.A.29) family. SLC25A38 subfamily.

It localises to the mitochondrion inner membrane. It carries out the reaction glycine(in) = glycine(out). Its function is as follows. Mitochondrial glycine transporter that imports glycine into the mitochondrial matrix. Plays an important role in providing glycine for the first enzymatic step in heme biosynthesis, the condensation of glycine with succinyl-CoA to produce 5-aminolevulinate (ALA) in the mitochondrial matrix. Required during erythropoiesis. In terms of biological role, plays a role as pro-apoptotic protein that induces caspase-dependent apoptosis. In Mus musculus (Mouse), this protein is Mitochondrial glycine transporter.